The sequence spans 246 residues: Phosphatidylserine decarboxylase proenzyme (246 aa).

Ser-204 (schiff-base intermediate with substrate; via pyruvic acid) is an active-site residue. Ser-204 is subject to Pyruvic acid (Ser); by autocatalysis.

This sequence belongs to the phosphatidylserine decarboxylase family. PSD-A subfamily. Heterodimer of a large membrane-associated beta subunit and a small pyruvoyl-containing alpha subunit. The cofactor is pyruvate. In terms of processing, is synthesized initially as an inactive proenzyme. Formation of the active enzyme involves a self-maturation process in which the active site pyruvoyl group is generated from an internal serine residue via an autocatalytic post-translational modification. Two non-identical subunits are generated from the proenzyme in this reaction, and the pyruvate is formed at the N-terminus of the alpha chain, which is derived from the carboxyl end of the proenzyme. The post-translation cleavage follows an unusual pathway, termed non-hydrolytic serinolysis, in which the side chain hydroxyl group of the serine supplies its oxygen atom to form the C-terminus of the beta chain, while the remainder of the serine residue undergoes an oxidative deamination to produce ammonia and the pyruvoyl prosthetic group on the alpha chain.

The protein resides in the cell membrane. The enzyme catalyses a 1,2-diacyl-sn-glycero-3-phospho-L-serine + H(+) = a 1,2-diacyl-sn-glycero-3-phosphoethanolamine + CO2. Its pathway is phospholipid metabolism; phosphatidylethanolamine biosynthesis; phosphatidylethanolamine from CDP-diacylglycerol: step 2/2. In terms of biological role, catalyzes the formation of phosphatidylethanolamine (PtdEtn) from phosphatidylserine (PtdSer). The polypeptide is Phosphatidylserine decarboxylase proenzyme (Zymomonas mobilis subsp. mobilis (strain ATCC 31821 / ZM4 / CP4)).